Here is a 530-residue protein sequence, read N- to C-terminus: Ubiquitin carboxyl-terminal hydrolase 17-like protein 11 (530 aa).

Residues alanine 80–lysine 375 form the USP domain. Cysteine 89 serves as the catalytic Nucleophile. The Proton acceptor role is filled by histidine 334. 2 stretches are compositionally biased toward basic and acidic residues: residues serine 382–arginine 392 and aspartate 398–proline 413. 2 disordered regions span residues serine 382–proline 413 and arginine 509–glutamine 530. Residues glycine 510–arginine 524 are compositionally biased toward basic residues.

The protein belongs to the peptidase C19 family. USP17 subfamily.

The protein localises to the nucleus. It localises to the endoplasmic reticulum. The catalysed reaction is Thiol-dependent hydrolysis of ester, thioester, amide, peptide and isopeptide bonds formed by the C-terminal Gly of ubiquitin (a 76-residue protein attached to proteins as an intracellular targeting signal).. Functionally, deubiquitinating enzyme that removes conjugated ubiquitin from specific proteins to regulate different cellular processes that may include cell proliferation, progression through the cell cycle, apoptosis, cell migration, and the cellular response to viral infection. The protein is Ubiquitin carboxyl-terminal hydrolase 17-like protein 11 (USP17L11) of Homo sapiens (Human).